A 637-amino-acid chain; its full sequence is Chaperone protein dnaK2 (637 aa).

Phosphothreonine; by autocatalysis is present on threonine 197. The interval 602-637 is disordered; it reads AAAGGAAPGGDAGASAASGGGDASDDVIDAEFTETK. Residues 603–623 are compositionally biased toward gly residues; that stretch reads AAGGAAPGGDAGASAASGGGD. A compositionally biased stretch (acidic residues) spans 624–637; the sequence is ASDDVIDAEFTETK.

This sequence belongs to the heat shock protein 70 family.

Acts as a chaperone. In Parasynechococcus marenigrum (strain WH8102), this protein is Chaperone protein dnaK2 (dnaK2).